The sequence spans 378 residues: Cytochrome P450 2C15 (378 aa).

Position 323 (Cys-323) interacts with heme.

The protein belongs to the cytochrome P450 family. The cofactor is heme.

The protein resides in the endoplasmic reticulum membrane. Its subcellular location is the microsome membrane. It catalyses the reaction an organic molecule + reduced [NADPH--hemoprotein reductase] + O2 = an alcohol + oxidized [NADPH--hemoprotein reductase] + H2O + H(+). Its function is as follows. Cytochromes P450 are a group of heme-thiolate monooxygenases. In liver microsomes, this enzyme is involved in an NADPH-dependent electron transport pathway. It oxidizes a variety of structurally unrelated compounds, including steroids, fatty acids, and xenobiotics. The polypeptide is Cytochrome P450 2C15 (CYP2C15) (Oryctolagus cuniculus (Rabbit)).